The sequence spans 215 residues: NAD(P)H-hydrate epimerase (215 aa).

One can recognise a YjeF N-terminal domain in the interval 10-211 (AQRYDAHATN…DIGIYAQDRV (202 aa)). 58-62 (NNGGD) provides a ligand contact to (6S)-NADPHX. 2 residues coordinate K(+): Asn59 and Asp121. Residues 125-131 (GVGLTRD) and Asp154 each bind (6S)-NADPHX. A K(+)-binding site is contributed by Ser157.

Belongs to the NnrE/AIBP family. It depends on K(+) as a cofactor.

It catalyses the reaction (6R)-NADHX = (6S)-NADHX. It carries out the reaction (6R)-NADPHX = (6S)-NADPHX. Its function is as follows. Catalyzes the epimerization of the S- and R-forms of NAD(P)HX, a damaged form of NAD(P)H that is a result of enzymatic or heat-dependent hydration. This is a prerequisite for the S-specific NAD(P)H-hydrate dehydratase to allow the repair of both epimers of NAD(P)HX. In Levilactobacillus brevis (strain ATCC 367 / BCRC 12310 / CIP 105137 / JCM 1170 / LMG 11437 / NCIMB 947 / NCTC 947) (Lactobacillus brevis), this protein is NAD(P)H-hydrate epimerase.